The primary structure comprises 154 residues: Superoxide dismutase [Cu-Zn] (154 aa).

The Cu cation site is built by His-47, His-49, and His-64. A disulfide bond links Cys-58 and Cys-147. 4 residues coordinate Zn(2+): His-64, His-72, His-81, and Asp-84. His-121 serves as a coordination point for Cu cation. A substrate-binding site is contributed by Arg-144.

It belongs to the Cu-Zn superoxide dismutase family. As to quaternary structure, homodimer. Cu cation serves as cofactor. The cofactor is Zn(2+).

It is found in the cytoplasm. It carries out the reaction 2 superoxide + 2 H(+) = H2O2 + O2. Functionally, destroys radicals which are normally produced within the cells and which are toxic to biological systems. This chain is Superoxide dismutase [Cu-Zn] (SOD1), found in Eremothecium gossypii (strain ATCC 10895 / CBS 109.51 / FGSC 9923 / NRRL Y-1056) (Yeast).